Consider the following 101-residue polypeptide: Small ubiquitin-related modifier 1 (101 aa).

S2 is modified (N-acetylserine). Phosphoserine is present on S2. K7 is covalently cross-linked (Glycyl lysine isopeptide (Lys-Gly) (interchain with G-Cter in SUMO1); alternate). A Glycyl lysine isopeptide (Lys-Gly) (interchain with G-Cter in SUMO2); alternate cross-link involves residue K7. Position 9 is a phosphoserine (S9). Glycyl lysine isopeptide (Lys-Gly) (interchain with G-Cter in SUMO2) cross-links involve residues K16, K17, and K23. One can recognise a Ubiquitin-like domain in the interval 20–97; that stretch reads EYIKLKVIGQ…IEVYQEQTGG (78 aa). K25 participates in a covalent cross-link: Glycyl lysine isopeptide (Lys-Gly) (interchain with G-Cter in SUMO1). Position 32 is a phosphoserine (S32). Glycyl lysine isopeptide (Lys-Gly) (interchain with G-Cter in SUMO2) cross-links involve residues K37, K39, K45, and K46. Residue G97 forms a Glycyl lysine isopeptide (Gly-Lys) (interchain with K-? in acceptor proteins) linkage. A propeptide spanning residues 98-101 is cleaved from the precursor; that stretch reads HSNV.

Belongs to the ubiquitin family. SUMO subfamily. In terms of assembly, covalently attached to KCNB1; UBE2I increases cross-linking with KCNB1 and PIAS1 decreases cross-links with KCNB1. Interacts with SAE2, RANBP2, PIAS1 and PIAS2. Interacts with PRKN. Covalently attached to a number of proteins such as IKFZ1, PML, RANGAP1, HIPK2, SP100, p53, p73-alpha, MDM2, JUN, DNMT3B and TDG. Also interacts with HIF1A, HIPK2, HIPK3, CHD3, EXOSC9, RAD51 and RAD52. Interacts with USP25 (via ts SIM domain); the interaction weakly sumoylates USP25. Interacts with SIMC1, CASP8AP2, RNF111 and SOBP (via SIM domains). Interacts with BHLHE40/DEC1. Interacts with RWDD3. Interacts with UBE2I/UBC9 and this interaction is enhanced in the presence of RWDD3. Interacts with MTA1. Interacts with SENP2. Interacts with HINT1. In terms of processing, cleavage of precursor form by SENP1 or SENP2 is necessary for function. Polymeric SUMO1 chains undergo polyubiquitination by RNF4.

Its subcellular location is the nucleus membrane. The protein localises to the nucleus speckle. It is found in the cytoplasm. The protein resides in the nucleus. It localises to the PML body. Its subcellular location is the cell membrane. Its function is as follows. Ubiquitin-like protein that can be covalently attached to proteins as a monomer or a lysine-linked polymer. Covalent attachment via an isopeptide bond to its substrates requires prior activation by the E1 complex SAE1-SAE2 and linkage to the E2 enzyme UBE2I, and can be promoted by E3 ligases such as PIAS1-4, RANBP2 or CBX4. This post-translational modification on lysine residues of proteins plays a crucial role in a number of cellular processes such as nuclear transport, DNA replication and repair, mitosis and signal transduction. Involved for instance in targeting RANGAP1 to the nuclear pore complex protein RANBP2. Covalently attached to the voltage-gated potassium channel KCNB1; this modulates the gating characteristics of KCNB1. Polymeric SUMO1 chains are also susceptible to polyubiquitination which functions as a signal for proteasomal degradation of modified proteins. May be involved in modified proteins. May also regulate a network of genes involved in palate development. Covalently attached to ZFHX3. This is Small ubiquitin-related modifier 1 (SUMO1) from Ictidomys tridecemlineatus (Thirteen-lined ground squirrel).